The primary structure comprises 170 residues: Bifunctional protein PyrR (170 aa).

The PRPP-binding motif lies at 90-102 (LVLIDDVLMSGRT).

Belongs to the purine/pyrimidine phosphoribosyltransferase family. PyrR subfamily.

It catalyses the reaction UMP + diphosphate = 5-phospho-alpha-D-ribose 1-diphosphate + uracil. Functionally, regulates the transcription of the pyrimidine nucleotide (pyr) operon in response to exogenous pyrimidines. Its function is as follows. Also displays a weak uracil phosphoribosyltransferase activity which is not physiologically significant. The polypeptide is Bifunctional protein PyrR (Pseudomonas savastanoi pv. phaseolicola (strain 1448A / Race 6) (Pseudomonas syringae pv. phaseolicola (strain 1448A / Race 6))).